Reading from the N-terminus, the 162-residue chain is Xanthine-guanine phosphoribosyltransferase (162 aa).

5-phospho-alpha-D-ribose 1-diphosphate is bound by residues 43-44 (RG) and 94-102 (DDLVDTGTT). Asp-95 serves as a coordination point for Mg(2+). The guanine site is built by Asp-98 and Ile-141. Xanthine contacts are provided by Asp-98 and Ile-141. Residues 98 to 102 (DTGTT) and 140 to 141 (WI) each bind GMP.

This sequence belongs to the purine/pyrimidine phosphoribosyltransferase family. XGPT subfamily. As to quaternary structure, homotetramer. Requires Mg(2+) as cofactor.

It localises to the cell inner membrane. The catalysed reaction is GMP + diphosphate = guanine + 5-phospho-alpha-D-ribose 1-diphosphate. It carries out the reaction XMP + diphosphate = xanthine + 5-phospho-alpha-D-ribose 1-diphosphate. It catalyses the reaction IMP + diphosphate = hypoxanthine + 5-phospho-alpha-D-ribose 1-diphosphate. The protein operates within purine metabolism; GMP biosynthesis via salvage pathway; GMP from guanine: step 1/1. It participates in purine metabolism; XMP biosynthesis via salvage pathway; XMP from xanthine: step 1/1. Its function is as follows. Purine salvage pathway enzyme that catalyzes the transfer of the ribosyl-5-phosphate group from 5-phospho-alpha-D-ribose 1-diphosphate (PRPP) to the N9 position of the 6-oxopurines guanine and xanthine to form the corresponding ribonucleotides GMP (guanosine 5'-monophosphate) and XMP (xanthosine 5'-monophosphate), with the release of PPi. To a lesser extent, also acts on hypoxanthine. The polypeptide is Xanthine-guanine phosphoribosyltransferase (Oleidesulfovibrio alaskensis (strain ATCC BAA-1058 / DSM 17464 / G20) (Desulfovibrio alaskensis)).